The chain runs to 656 residues: Pyoverdine export ATP-binding/permease protein PvdT (656 aa).

Residues isoleucine 6–valine 245 enclose the ABC transporter domain. Position 43-50 (glycine 43–serine 50) interacts with ATP. 4 helical membrane passes run alanine 284–glycine 304, isoleucine 538–valine 558, leucine 589–leucine 609, and valine 619–methionine 639.

The protein belongs to the ABC transporter superfamily. Macrolide exporter (TC 3.A.1.122) family. As to quaternary structure, part of the tripartite efflux system PvdRT-OpmQ, which is composed of an inner membrane component with both ATPase and permease domains, PvdT, a periplasmic membrane fusion protein, PvdR, and an outer membrane component, OpmQ.

It is found in the cell inner membrane. Its function is as follows. Part of the tripartite efflux system PvdRT-OpmQ required for the secretion into the extracellular milieu of the siderophore pyoverdine (PVD), which is involved in iron acquisition. This subunit binds PVD and drives its secretion by hydrolyzing ATP. The system is responsible for export of newly synthesized PVD after the final steps of biosynthesis have taken place in the periplasm. It is also responsible for recycling of PVD after internalization of ferri-PVD into the periplasm by the outer-membrane receptor FpvA and release of iron from PVD, thus making PVD available for new cycles of iron uptake. This chain is Pyoverdine export ATP-binding/permease protein PvdT, found in Pseudomonas savastanoi pv. phaseolicola (strain 1448A / Race 6) (Pseudomonas syringae pv. phaseolicola (strain 1448A / Race 6)).